The chain runs to 877 residues: Probable sulfate permease C3H7.02 (877 aa).

13 helical membrane-spanning segments follow: residues 133-153, 161-181, 186-206, 221-241, 243-263, 292-312, 329-349, 384-404, 424-444, 461-481, 484-504, 518-538, and 543-563; these read WLVY…PQGM, LPAQ…CIFA, VSIG…ANVQ, LALL…GFII, FIPV…IMAG, LPHT…LYLV, VFFL…TAIS, LCAD…LEHI, LIAM…PATG, LGGI…TGAF, IPNA…IIPW, ALIF…NGIY, and LSAA…LGIL. The STAS domain maps to 594 to 747; the sequence is NLTVRDPPAG…SRSIEVGSAA (154 aa). Disordered regions lie at residues 643 to 663 and 793 to 821; these read KASD…APEV and ADSD…TFSH. The span at 801–821 shows a compositional bias: basic and acidic residues; sequence SDDKDKKVEGHRPSQDPTFSH.

Belongs to the SLC26A/SulP transporter (TC 2.A.53) family.

Its subcellular location is the membrane. In terms of biological role, high affinity uptake of sulfate into the cell. This chain is Probable sulfate permease C3H7.02, found in Schizosaccharomyces pombe (strain 972 / ATCC 24843) (Fission yeast).